Here is a 267-residue protein sequence, read N- to C-terminus: Interleukin-1 alpha (267 aa).

Positions 1 to 112 are excised as a propeptide; sequence MAKVPDLFED…DPEEGIIKPR (112 aa). N-linked (GlcNAc...) asparagine glycosylation is present at asparagine 64. Residue lysine 82 is modified to N6-acetyllysine. Residues 82 to 86 are nuclear localization signal (NLS); it reads KKRRL. Serine 87 carries the phosphoserine modification. 2 N-linked (GlcNAc...) asparagine glycosylation sites follow: asparagine 100 and asparagine 141.

This sequence belongs to the IL-1 family. As to quaternary structure, monomer. Interacts with TMED10; the interaction mediates the translocation from the cytoplasm into the ERGIC (endoplasmic reticulum-Golgi intermediate compartment) and thereby secretion. Interacts with IL1R1. Interacts with S100A13; this interaction is the first step in the export of IL1A, followed by direct translocation of this complex across the plasma membrane. Post-translationally, acetylated within its nuclear localization sequence, which impacts subcellular localization. In terms of processing, proteolytic processed by CAPN1 in a calcium-dependent manner. Cleavage from 31 kDa precursor to 18 kDa biologically active molecules. Phosphorylated. Phosphorylation greatly enhances susceptibility to digestion and promotes the conversion of pre-IL1A alpha to the biologically active IL1A.

Its subcellular location is the nucleus. It is found in the cytoplasm. The protein resides in the secreted. Its function is as follows. Cytokine constitutively present intracellularly in nearly all resting non-hematopoietic cells that plays an important role in inflammation and bridges the innate and adaptive immune systems. After binding to its receptor IL1R1 together with its accessory protein IL1RAP, forms the high affinity interleukin-1 receptor complex. Signaling involves the recruitment of adapter molecules such as MYD88, IRAK1 or IRAK4. In turn, mediates the activation of NF-kappa-B and the three MAPK pathways p38, p42/p44 and JNK pathways. Within the cell, acts as an alarmin and cell death results in its liberation in the extracellular space after disruption of the cell membrane to induce inflammation and alert the host to injury or damage. In addition to its role as a danger signal, which occurs when the cytokine is passively released by cell necrosis, directly senses DNA damage and acts as signal for genotoxic stress without loss of cell integrity. The polypeptide is Interleukin-1 alpha (IL1A) (Oryctolagus cuniculus (Rabbit)).